Consider the following 216-residue polypeptide: Glycerol-3-phosphate acyltransferase (216 aa).

5 helical membrane passes run 4 to 24, 56 to 76, 80 to 100, 112 to 132, and 138 to 158; these read IALGMIIFAYLCGSISSAILV, VAVLLFDILKGMLPVWIAYLL, PLYLGLTAIAACLGHIYPVFF, FGAIAPIGWDLTGLMTGTWLL, and GYSSLGAIVSALIAPFYVWWF.

This sequence belongs to the PlsY family. Probably interacts with PlsX.

The protein resides in the cell inner membrane. The enzyme catalyses an acyl phosphate + sn-glycerol 3-phosphate = a 1-acyl-sn-glycero-3-phosphate + phosphate. Its pathway is lipid metabolism; phospholipid metabolism. Catalyzes the transfer of an acyl group from acyl-phosphate (acyl-PO(4)) to glycerol-3-phosphate (G3P) to form lysophosphatidic acid (LPA). This enzyme utilizes acyl-phosphate as fatty acyl donor, but not acyl-CoA or acyl-ACP. The chain is Glycerol-3-phosphate acyltransferase from Yersinia pseudotuberculosis serotype O:1b (strain IP 31758).